A 198-amino-acid polypeptide reads, in one-letter code: Nucleoid occlusion factor SlmA (198 aa).

In terms of domain architecture, HTH tetR-type spans 9–70; it reads RNRREEILQA…SLIEFIEDSL (62 aa). Positions 33-52 form a DNA-binding region, H-T-H motif; it reads TTAKLAANVGVSEAALYRHF. Positions 113–144 form a coiled coil; that stretch reads ALMFEQDRLQDRINQLFERIESQLRQVLREHK.

Belongs to the nucleoid occlusion factor SlmA family. Homodimer. Interacts with FtsZ.

The protein resides in the cytoplasm. It is found in the nucleoid. Its function is as follows. Required for nucleoid occlusion (NO) phenomenon, which prevents Z-ring formation and cell division over the nucleoid. Acts as a DNA-associated cell division inhibitor that binds simultaneously chromosomal DNA and FtsZ, and disrupts the assembly of FtsZ polymers. SlmA-DNA-binding sequences (SBS) are dispersed on non-Ter regions of the chromosome, preventing FtsZ polymerization at these regions. The polypeptide is Nucleoid occlusion factor SlmA (Pectobacterium carotovorum subsp. carotovorum (strain PC1)).